The following is a 436-amino-acid chain: 3-ketoacyl-CoA thiolase (436 aa).

The active-site Acyl-thioester intermediate is the Cys-99. Active-site proton acceptor residues include His-392 and Cys-422.

It belongs to the thiolase-like superfamily. Thiolase family. Heterotetramer of two alpha chains (FadJ) and two beta chains (FadI).

It is found in the cytoplasm. It carries out the reaction an acyl-CoA + acetyl-CoA = a 3-oxoacyl-CoA + CoA. Its pathway is lipid metabolism; fatty acid beta-oxidation. Its function is as follows. Catalyzes the final step of fatty acid oxidation in which acetyl-CoA is released and the CoA ester of a fatty acid two carbons shorter is formed. The sequence is that of 3-ketoacyl-CoA thiolase from Pseudoalteromonas atlantica (strain T6c / ATCC BAA-1087).